We begin with the raw amino-acid sequence, 473 residues long: MFIVVVTIFENYTQWYSSLLTIFSLTIKRKLKTIRSMQDSTSKCTCTEHHMGGTICCCCRSDAEENEQLTSVILSRKPPPQEQCRGNLLVFINPNSGTGKSLETFANTVGPKLDKSLIRYEVVVTTGPNHARNVLMTKADLGKFNGVLILSGDGLVFEALNGILCREDAFRIFPTLPIGIVPSGSGNGLLCSVLSKYGTKMNEKSVMERALEIATSPTAKAESVALYSVKTDNQSYASFLSIGWGLMADIDIDSEKWRKSLGHHRFTVMGFIRSCNLRSYKGRLTYRPYKPKGFHPSSNVFSVYEKTTQQRIDDSKVKTNGSVSDSEEETMETKFQNWTLPDSDETLAVGSSDLEETVVIEDNFVNIYAVTLSHIAADGPFAPSAKLEDNRIHLSYILWKDIGTRVNIAKYLLAIEHETHLDLPFVKHVEVSSMKLEVISEGSHVVLDGEVVDTKTIEVASTKNHISVFSSTA.

Positions 83–233 constitute a DAGKc domain; that stretch reads QCRGNLLVFI…VALYSVKTDN (151 aa). ATP contacts are provided by residues 93-95 and 125-129; these read NPN and TTGPN. 151–154 lines the substrate pocket; that stretch reads SGDG. The active-site Proton donor/acceptor is the D153. ATP is bound by residues E158 and 184 to 186; that span reads GSG. Substrate is bound at residue D251. ATP-binding positions include R258, R265, and 448–450; that span reads DGE.

It depends on Mg(2+) as a cofactor. In terms of tissue distribution, expressed in the majority of cholinergic and GABAergic neurons, body wall muscle, excretory canal cells, intestine, and hypodermis.

The protein resides in the presynaptic cell membrane. It is found in the cell projection. It localises to the axon. Its subcellular location is the perikaryon. The protein localises to the mitochondrion membrane. It catalyses the reaction a sphingoid base + ATP = a sphingoid 1-phosphate + ADP + H(+). It carries out the reaction 15-methylhexadecasphing-4-enine + ATP = 15-methylhexadecasphing-4-enine 1-phosphate + ADP + H(+). The enzyme catalyses 15-methylhexadecasphinganine + ATP = 15-methylhexadecasphinganine 1-phosphate + ADP + H(+). The protein operates within lipid metabolism; sphingolipid metabolism. In terms of biological role, catalyzes the phosphorylation of sphingoid bases to form sphingoid 1-phosphate (SPP), which have both intra- and extracellular functions. C.elegans contain specific sphingoid bases, which are unique or different in structure compared to the sphingoid bases found in other animals. Two examples of these distinctive compounds are: 15-methylhexadecasphinganine and 15-methylhexadecasphing-4-enine. Required for neurotransmitter release from neuromuscular junctions. Acts by recruiting the synaptic vesicle priming protein unc-13 to synapses. The chain is Sphingosine kinase 1 (sphk-1) from Caenorhabditis elegans.